The following is a 536-amino-acid chain: ADP,ATP carrier protein 4 (536 aa).

The next 9 membrane-spanning stretches (helical) occupy residues 44–64 (VLLF…LYVL), 77–97 (SILF…IVIV), 109–129 (MLEV…FVIW), 172–194 (TMLY…FSRA), 205–225 (KFLP…GLLT), 244–264 (FSQV…TSFF), 309–329 (VVAA…GIVL), 349–369 (AQII…THLI), and 378–398 (AITA…MVFF). N-linked (GlcNAc...) asparagine glycosylation is found at asparagine 400 and asparagine 421. Helical transmembrane passes span 465–485 (LGIN…TVVF) and 493–513 (VVSV…RSIL).

It belongs to the ADP/ATP translocase tlc family.

Its subcellular location is the cell membrane. In terms of biological role, ATP transporter involved in the uptake of ATP from the host cell cytoplasm. Provides the microsporidian cell with host ATP in exchange for ADP. This is an obligate exchange system. This energy acquiring activity is an important component of microsporidian parasitism. This chain is ADP,ATP carrier protein 4 (NTT4), found in Encephalitozoon cuniculi (strain GB-M1) (Microsporidian parasite).